Here is a 441-residue protein sequence, read N- to C-terminus: RNA-binding protein BRN1 (441 aa).

2 RRM domains span residues 18-99 (VKLF…YADG) and 106-186 (HKLF…WADT). Polar residues predominate over residues 258 to 273 (QPNQGNNNALQGTSPD). Residues 258-282 (QPNQGNNNALQGTSPDSVPPRLARR) form a disordered region. The 79-residue stretch at 349-427 (ANLFIYNIPR…KKLKVQLKRD (79 aa)) folds into the RRM 3 domain.

As to expression, highly expressed in stems and cauline leaves, and at lower levels in siliques, flowers, roots and rosette leaves.

The protein localises to the cytoplasm. Functionally, RNA-binding protein involved in the regulation of flowering time. Acts as a repressor of the activity of SOC1, a transcriptional activator of flowering time. Binds to the 3'-UTR of SOC1 mRNA in the cytoplasm and participates in SOC1 mRNA decay, mediated by the distal region of the SOC1 3'-UTR. Acts as a positive regulator of salicylic acid (SA)-mediated immunity. May act on SA signaling-related genes at a post-transcriptional level. The chain is RNA-binding protein BRN1 from Arabidopsis thaliana (Mouse-ear cress).